The sequence spans 349 residues: Hydroxymethylglutaryl-CoA synthase (349 aa).

Residues Asp-30 and Ala-31 each contribute to the (3S)-3-hydroxy-3-methylglutaryl-CoA site. Glu-82 serves as the catalytic Proton donor/acceptor. (3S)-3-hydroxy-3-methylglutaryl-CoA is bound by residues Cys-114 and Thr-155. Residue Cys-114 is the Acyl-thioester intermediate of the active site. Arg-203 is a binding site for CoA. Positions 205 and 238 each coordinate (3S)-3-hydroxy-3-methylglutaryl-CoA. The active-site Proton donor/acceptor is His-238. Position 243 (Lys-243) interacts with CoA. (3S)-3-hydroxy-3-methylglutaryl-CoA-binding residues include Asn-270 and Ser-300.

It belongs to the thiolase-like superfamily. Archaeal HMG-CoA synthase family. As to quaternary structure, interacts with acetoacetyl-CoA thiolase that catalyzes the precedent step in the pathway and with a DUF35 protein. The acetoacetyl-CoA thiolase/HMG-CoA synthase complex channels the intermediate via a fused CoA-binding site, which allows for efficient coupling of the endergonic thiolase reaction with the exergonic HMGCS reaction.

The catalysed reaction is acetoacetyl-CoA + acetyl-CoA + H2O = (3S)-3-hydroxy-3-methylglutaryl-CoA + CoA + H(+). It participates in metabolic intermediate biosynthesis; (R)-mevalonate biosynthesis; (R)-mevalonate from acetyl-CoA: step 2/3. Its function is as follows. Catalyzes the condensation of acetyl-CoA with acetoacetyl-CoA to form 3-hydroxy-3-methylglutaryl-CoA (HMG-CoA). Functions in the mevalonate (MVA) pathway leading to isopentenyl diphosphate (IPP), a key precursor for the biosynthesis of isoprenoid compounds that are building blocks of archaeal membrane lipids. The sequence is that of Hydroxymethylglutaryl-CoA synthase from Methanococcus vannielii (strain ATCC 35089 / DSM 1224 / JCM 13029 / OCM 148 / SB).